Consider the following 593-residue polypeptide: Meiotic recombination protein REC8 homolog (593 aa).

A Phosphoserine modification is found at serine 149. Threonine 164 carries the phosphothreonine modification. Position 192 is a phosphoserine (serine 192). 3 disordered regions span residues 247–282, 317–344, and 422–444; these read QRRA…AQVE, ELRL…RRGR, and PQLE…RRKT. A compositionally biased stretch (basic and acidic residues) spans 255–265; it reads DESKEEPRALE. The span at 432–444 shows a compositional bias: basic and acidic residues; that stretch reads EERVADKEERRKT.

This sequence belongs to the rad21 family. In terms of assembly, interacts (phosphorylated and unphosphorylated form) with SMC3. Interacts with SYCP3. Interacts (phosphorylated and unphosphorylated form) with SMC1B. Does not interact with SMC1A. Interacts with RAD51. Forms a complex with EWSR1, PRDM9, SYCP3 and SYCP1; complex formation is dependent of phosphorylated form of REC8 and requires PRDM9 bound to hotspot DNA; EWSR1 joins PRDM9 with the chromosomal axis through REC8. Phosphorylated.

The protein resides in the nucleus. The protein localises to the chromosome. It localises to the centromere. Its function is as follows. Required during meiosis for separation of sister chromatids and homologous chromosomes. Proteolytic cleavage of REC8 on chromosome arms by separin during anaphase I allows for homologous chromosome separation in meiosis I and cleavage of REC8 on centromeres during anaphase II allows for sister chromatid separation in meiosis II. This Rattus norvegicus (Rat) protein is Meiotic recombination protein REC8 homolog.